The sequence spans 197 residues: Imidazoleglycerol-phosphate dehydratase (197 aa).

It belongs to the imidazoleglycerol-phosphate dehydratase family.

The protein localises to the cytoplasm. It carries out the reaction D-erythro-1-(imidazol-4-yl)glycerol 3-phosphate = 3-(imidazol-4-yl)-2-oxopropyl phosphate + H2O. The protein operates within amino-acid biosynthesis; L-histidine biosynthesis; L-histidine from 5-phospho-alpha-D-ribose 1-diphosphate: step 6/9. The chain is Imidazoleglycerol-phosphate dehydratase from Pseudomonas putida (strain GB-1).